The sequence spans 219 residues: Cytidylate kinase (219 aa).

21-29 lines the ATP pocket; sequence GPAASGKGT.

It belongs to the cytidylate kinase family. Type 1 subfamily.

Its subcellular location is the cytoplasm. The catalysed reaction is CMP + ATP = CDP + ADP. The enzyme catalyses dCMP + ATP = dCDP + ADP. The sequence is that of Cytidylate kinase from Rickettsia felis (strain ATCC VR-1525 / URRWXCal2) (Rickettsia azadi).